The chain runs to 257 residues: High-affinity copper transporter ctrC (257 aa).

Helical transmembrane passes span arginine 79–leucine 99 and tyrosine 202–phenylalanine 222.

Belongs to the copper transporter (Ctr) (TC 1.A.56) family. SLC31A subfamily.

It is found in the cell membrane. The enzyme catalyses Cu(2+)(in) = Cu(2+)(out). In terms of biological role, high-affinity copper transporter of plasma membrane that mediates copper uptake under low copper conditions. The mechanism driving the transmembrane transport of copper has still to be determined. Acts as a potential virulence factor. This Aspergillus fumigatus (strain ATCC MYA-4609 / CBS 101355 / FGSC A1100 / Af293) (Neosartorya fumigata) protein is High-affinity copper transporter ctrC.